The primary structure comprises 414 residues: MSFTIQTVTFTAPQPLGALPDSRGRFGRFGGQYVPETLMSALAQLEAAFNQYRHDPQFLAEFAGHLRDFVGRPTPLYFAERLTAHWGGGRIFLKREDLNHTGAHKINNALGQALLALRMGKRRIIAETGAGQHGVATATVCARFGLECIIYMGVHDIERQKLNVYRMKLLGAEVRPVAAGTGTLKDATSEAIRDWVTHVETTHYILGSAAGPHPYPLMVREFQAVIGRETRVQCLERLGRLPDVLIACVGGGSNAIGLFHDFLDERAVRLVGIEAAGEGIETGKHAATLTAGRAGVLHGAMSYVLQDEQGQVQEAHSLSAGLDYPGVGPEHSYLKDIGRAEYYSVTDSEALAALSLVCSTEGIIPALETAHAFAYLGILASQLHSEQIVVLNCSGRGDKDMGTVARAMGWGKEE.

N6-(pyridoxal phosphate)lysine is present on Lys-105.

The protein belongs to the TrpB family. As to quaternary structure, tetramer of two alpha and two beta chains. Pyridoxal 5'-phosphate serves as cofactor.

The enzyme catalyses (1S,2R)-1-C-(indol-3-yl)glycerol 3-phosphate + L-serine = D-glyceraldehyde 3-phosphate + L-tryptophan + H2O. It participates in amino-acid biosynthesis; L-tryptophan biosynthesis; L-tryptophan from chorismate: step 5/5. Functionally, the beta subunit is responsible for the synthesis of L-tryptophan from indole and L-serine. The chain is Tryptophan synthase beta chain from Gloeobacter violaceus (strain ATCC 29082 / PCC 7421).